The primary structure comprises 163 residues: 6,7-dimethyl-8-ribityllumazine synthase 1 (163 aa).

5-amino-6-(D-ribitylamino)uracil contacts are provided by residues Phe27, 58-60 (ALE), and 87-89 (CVV). 92–93 (ET) provides a ligand contact to (2S)-2-hydroxy-3-oxobutyl phosphate. His95 functions as the Proton donor in the catalytic mechanism. A 5-amino-6-(D-ribitylamino)uracil-binding site is contributed by Asn120. (2S)-2-hydroxy-3-oxobutyl phosphate is bound at residue Arg134.

Belongs to the DMRL synthase family.

It carries out the reaction (2S)-2-hydroxy-3-oxobutyl phosphate + 5-amino-6-(D-ribitylamino)uracil = 6,7-dimethyl-8-(1-D-ribityl)lumazine + phosphate + 2 H2O + H(+). The protein operates within cofactor biosynthesis; riboflavin biosynthesis; riboflavin from 2-hydroxy-3-oxobutyl phosphate and 5-amino-6-(D-ribitylamino)uracil: step 1/2. Its function is as follows. Catalyzes the formation of 6,7-dimethyl-8-ribityllumazine by condensation of 5-amino-6-(D-ribitylamino)uracil with 3,4-dihydroxy-2-butanone 4-phosphate. This is the penultimate step in the biosynthesis of riboflavin. This Rhodopseudomonas palustris (strain ATCC BAA-98 / CGA009) protein is 6,7-dimethyl-8-ribityllumazine synthase 1.